Consider the following 179-residue polypeptide: MAKLHDTYRQTVVQELMNQFGYNSVMQVPRIEKITLNMGVGEALADKKVLENAAGDLAAISGQKPLITKARKSVAGFKIREGYPIGCKVTLRGERMWEFLERLICISMPRIRDFRGVSAKSFDGRGNYSMGVREQIIFPEIDYDKVDKVRGLDITITTTAKTDEEGRALLAAFSFPFRK.

The protein belongs to the universal ribosomal protein uL5 family. Part of the 50S ribosomal subunit; part of the 5S rRNA/L5/L18/L25 subcomplex. Contacts the 5S rRNA and the P site tRNA. Forms a bridge to the 30S subunit in the 70S ribosome.

Its function is as follows. This is one of the proteins that bind and probably mediate the attachment of the 5S RNA into the large ribosomal subunit, where it forms part of the central protuberance. In the 70S ribosome it contacts protein S13 of the 30S subunit (bridge B1b), connecting the 2 subunits; this bridge is implicated in subunit movement. Contacts the P site tRNA; the 5S rRNA and some of its associated proteins might help stabilize positioning of ribosome-bound tRNAs. This is Large ribosomal subunit protein uL5 from Tolumonas auensis (strain DSM 9187 / NBRC 110442 / TA 4).